The sequence spans 523 residues: MFS-type transporter R5 (523 aa).

Positions 19–42 (QLNEATAQRESATNNPNDSSSIDE) are disordered. Over residues 21–38 (NEATAQRESATNNPNDSS) the composition is skewed to polar residues. N-linked (GlcNAc...) asparagine glycosylation is found at Asn-35, Asn-94, and Asn-143. 2 helical membrane passes run 183–203 (AYLT…GGLL) and 211–231 (AIFW…FTFF). N-linked (GlcNAc...) asparagine glycans are attached at residues Asn-235 and Asn-250. The next 6 helical transmembrane spans lie at 291-311 (FIVC…ISIF), 319-339 (YGYS…GSIL), 381-401 (LTIS…YGWL), 408-428 (VASV…VLIA), 443-463 (ALGA…VAAV), and 470-490 (IGIG…LPAL).

It belongs to the major facilitator superfamily.

It localises to the membrane. In terms of biological role, MFS-type transporter; part of the gene cluster that mediates the biosynthesis of squalestatin S1 (SQS1, also known as zaragozic acid A), a heavily oxidized fungal polyketide that offers potent cholesterol lowering activity by targeting squalene synthase (SS). The chain is MFS-type transporter R5 from Phoma sp. (strain ATCC 20986 / MF5453).